Consider the following 472-residue polypeptide: MATAVSTVGAATRAPLNLNGSSAGASVPTSGFLGSSLKKHTNVRFPSSSRTTSMTVKAAENEEKNTDKWAHLAKDFSDDQLDIRRGKGMVDSLFQAPADAGTHVPIQSSFEYESQGLRKYDIDNMLGDFYIAPAFMDKLVVHITKNFLNLPNIKIPLILGVWGGKGQGKSFQCELVFAKLGINPIMMSAGELESGNAGEPAKLIRQRYREAADLIAKGKMCALFINDLEPGAGRMGGTTQYTVNNQMVNATLMNIADNPTNVQLPGMYNKQDNARVPIIVTGNDFSTLYAPLIRDGRMEKFYWAPTREDRIGVCTGIFKTDKVPAEHVVKLVDAFPGQSIDFFGALRARVYHDEVRKWVNSVGVDNVGKKLVNSKDGPPVFEQPEMTLQKLMEYGNMLVQEQENVKRVQLADQYMSSAALGDANKDAIDRGTFFGKAAQQVSLPVAQGCTDPEAKNYDPTARSDDGSCTYNL.

A chloroplast-targeting transit peptide spans 1 to 58 (MATAVSTVGAATRAPLNLNGSSAGASVPTSGFLGSSLKKHTNVRFPSSSRTTSMTVKA). Position 163–170 (163–170 (GGKGQGKS)) interacts with ATP. Positions 448 to 472 (GCTDPEAKNYDPTARSDDGSCTYNL) are disordered. A compositionally biased stretch (basic and acidic residues) spans 452-465 (PEAKNYDPTARSDD).

This sequence belongs to the RuBisCO activase family.

The protein resides in the plastid. The protein localises to the chloroplast stroma. Functionally, activation of RuBisCO (ribulose-1,5-bisphosphate carboxylase/oxygenase; EC 4.1.1.39) involves the ATP-dependent carboxylation of the epsilon-amino group of lysine leading to a carbamate structure. This chain is Ribulose bisphosphate carboxylase/oxygenase activase, chloroplastic, found in Spinacia oleracea (Spinach).